Consider the following 394-residue polypeptide: Elongation factor Tu 1 (394 aa).

One can recognise a tr-type G domain in the interval 10–204 (KPHVNVGTIG…FLDSYIPEPE (195 aa)). The tract at residues 19 to 26 (GHVDHGKT) is G1. Residue 19-26 (GHVDHGKT) coordinates GTP. T26 is a binding site for Mg(2+). A G2 region spans residues 60–64 (GITIN). The segment at 81–84 (DCPG) is G3. GTP contacts are provided by residues 81-85 (DCPGH) and 136-139 (NKCD). Residues 136–139 (NKCD) are G4. A G5 region spans residues 174-176 (SAL).

The protein belongs to the TRAFAC class translation factor GTPase superfamily. Classic translation factor GTPase family. EF-Tu/EF-1A subfamily. In terms of assembly, monomer.

The protein resides in the cytoplasm. It carries out the reaction GTP + H2O = GDP + phosphate + H(+). GTP hydrolase that promotes the GTP-dependent binding of aminoacyl-tRNA to the A-site of ribosomes during protein biosynthesis. The chain is Elongation factor Tu 1 from Shigella flexneri serotype 5b (strain 8401).